A 509-amino-acid polypeptide reads, in one-letter code: Zinc finger CCCH-type with G patch domain-containing protein (509 aa).

The C3H1-type zinc finger occupies 155-178 (PCNYYLEGECRFDEIRCRYSHGAL). Residues 254–277 (EDELTSEDSSSSPHDESSDEIDSD) form a disordered region. The G-patch domain maps to 310 to 356 (TRGIGSKLMEKMGYIHGTGLGSEGRGIVTPVSAQILPQGRSLDACME). Residues 407–430 (LGGGESRHQGDQAAKKAKTNDLQQ) are disordered. Residues 411 to 420 (ESRHQGDQAA) show a composition bias toward basic and acidic residues.

The protein localises to the nucleus. Functionally, transcription repressor. This chain is Zinc finger CCCH-type with G patch domain-containing protein, found in Drosophila pseudoobscura pseudoobscura (Fruit fly).